Reading from the N-terminus, the 258-residue chain is Type III pantothenate kinase (258 aa).

6–13 (DVGNTNTV) contributes to the ATP binding site. Residues tyrosine 100 and 107–110 (GADR) each bind substrate. Aspartate 109 (proton acceptor) is an active-site residue. Aspartate 129 provides a ligand contact to K(+). Threonine 132 lines the ATP pocket. Position 184 (threonine 184) interacts with substrate.

It belongs to the type III pantothenate kinase family. As to quaternary structure, homodimer. The cofactor is NH4(+). K(+) serves as cofactor.

The protein resides in the cytoplasm. The catalysed reaction is (R)-pantothenate + ATP = (R)-4'-phosphopantothenate + ADP + H(+). It functions in the pathway cofactor biosynthesis; coenzyme A biosynthesis; CoA from (R)-pantothenate: step 1/5. Functionally, catalyzes the phosphorylation of pantothenate (Pan), the first step in CoA biosynthesis. This Bacillus licheniformis (strain ATCC 14580 / DSM 13 / JCM 2505 / CCUG 7422 / NBRC 12200 / NCIMB 9375 / NCTC 10341 / NRRL NRS-1264 / Gibson 46) protein is Type III pantothenate kinase.